We begin with the raw amino-acid sequence, 507 residues long: Arylsulfatase A (507 aa).

A signal peptide spans 1–18 (MGAPRSLLLALAAGLAVA). Positions 29, 30, and 69 each coordinate Ca(2+). The active-site Nucleophile is the Cys-69. 3-oxoalanine (Cys) is present on Cys-69. Lys-123 contacts substrate. His-125 is a catalytic residue. Ser-150 contacts substrate. Disulfide bonds link Cys-156/Cys-172 and Cys-161/Cys-168. Residue Asn-158 is glycosylated (N-linked (GlcNAc...) asparagine). An N-linked (GlcNAc...) asparagine glycan is attached at Asn-184. His-229 contacts substrate. Positions 281 and 282 each coordinate Ca(2+). Intrachain disulfides connect Cys-300/Cys-414, Cys-488/Cys-500, Cys-489/Cys-502, and Cys-493/Cys-499. Lys-302 contributes to the substrate binding site. N-linked (GlcNAc...) asparagine glycosylation occurs at Asn-350.

This sequence belongs to the sulfatase family. Homodimer at neutral pH and homooctamer at acidic pH. Exists both as a single chain of 58 kDa (component A) or as a chain of 50 kDa (component B) linked by disulfide bond(s) to a 7 kDa chain (component C). Interacts with SUMF1. The cofactor is Ca(2+). Post-translationally, the conversion to 3-oxoalanine (also known as C-formylglycine, FGly), of a serine or cysteine residue in prokaryotes and of a cysteine residue in eukaryotes, is critical for catalytic activity. This post-translational modification is severely defective in multiple sulfatase deficiency (MSD).

It is found in the endoplasmic reticulum. The protein localises to the lysosome. It carries out the reaction an N-acyl-1-beta-D-(3-O-sulfo)-galactosyl-sphing-4-enine + H2O = a beta-D-galactosyl-(1&lt;-&gt;1')-N-acylsphing-4-enine + sulfate + H(+). Its activity is regulated as follows. Inhibited by phosphate. The phosphate forms a covalent bond with the active site 3-oxoalanine. Its function is as follows. Hydrolyzes cerebroside sulfate. The polypeptide is Arylsulfatase A (ARSA) (Homo sapiens (Human)).